Here is a 396-residue protein sequence, read N- to C-terminus: Phosphoglycerate kinase (396 aa).

Substrate contacts are provided by residues 21–23 (DFN), Arg36, 59–62 (HFDR), Arg118, and Arg151. Residues Lys201, Glu323, and 353-356 (GGDT) each bind ATP.

The protein belongs to the phosphoglycerate kinase family. As to quaternary structure, monomer.

The protein localises to the cytoplasm. The catalysed reaction is (2R)-3-phosphoglycerate + ATP = (2R)-3-phospho-glyceroyl phosphate + ADP. It functions in the pathway carbohydrate degradation; glycolysis; pyruvate from D-glyceraldehyde 3-phosphate: step 2/5. The protein is Phosphoglycerate kinase of Caulobacter vibrioides (strain ATCC 19089 / CIP 103742 / CB 15) (Caulobacter crescentus).